A 509-amino-acid polypeptide reads, in one-letter code: MNARTEPEVFDTLAALIAVRAAQWPDKPYLLSPDSGHALTFGALATDAGTLGRSYAAAGLGSGQTVSVYLPNGEQTARLLLGTMACGLVVNPINLLCQPAQLRYILAHSDTRLVFTWPDGEAAIREALREAGLDVPVLVTAPDANSLPALPATHDAASPLPPPQPDAPALLMYTSGTTGTPKGVLLTQRNLVANGTNVSREHCLGPADRVLATLPLYHINGLVVTAIAPLVHGGSVVMPMRFSASAFWQDSARHGCTWLNVVPTIIAYLLNDPHGQAPAGVRFCRSASAALPPEHHRAFEARFGIGVIETMGMTETAAPAFSNPLDPGQRRIGSIGRPSGTRARVLGRDGKPAPDGQVGEIVLQGESVMAGYYKAPDITREAFTHDGWLRTGDLGYRDADGYFYISGRAKELIIKGGENIAPREIDEALLRHPGVLEAAAVGVPDPAYGQEIVAYVVMREAARCDDAALRAHCLRELGRYKTPKEFRFIAELPRGPSGKVQRLKLLNHA.

The disordered stretch occupies residues 320 to 340 (AFSNPLDPGQRRIGSIGRPSG).

This sequence belongs to the ATP-dependent AMP-binding enzyme family.

The protein resides in the cytoplasm. It carries out the reaction sulfoacetate + ATP + CoA = sulfoacetyl-CoA + AMP + diphosphate. In terms of biological role, involved in the degradation of sulfoacetate, a widespread natural product. Catalyzes the CoA- and ATP-dependent conversion of sulfoacetate to sulfoacetyl-CoA and AMP. This Cupriavidus necator (strain ATCC 17699 / DSM 428 / KCTC 22496 / NCIMB 10442 / H16 / Stanier 337) (Ralstonia eutropha) protein is Sulfoacetate--CoA ligase.